Reading from the N-terminus, the 149-residue chain is Ribonuclease H (149 aa).

One can recognise an RNase H type-1 domain in the interval 4 to 145 (QRGVVEAFTD…ADALANQGID (142 aa)). Asp-13, Glu-51, Asp-73, and Asp-137 together coordinate Mg(2+).

This sequence belongs to the RNase H family. Monomer. The cofactor is Mg(2+).

Its subcellular location is the cytoplasm. The enzyme catalyses Endonucleolytic cleavage to 5'-phosphomonoester.. Functionally, endonuclease that specifically degrades the RNA of RNA-DNA hybrids. The sequence is that of Ribonuclease H from Halorhodospira halophila (strain DSM 244 / SL1) (Ectothiorhodospira halophila (strain DSM 244 / SL1)).